The following is a 176-amino-acid chain: Ferritin, spleen middle subunit (176 aa).

The region spanning 7–156 (QNYHRDCEAA…DFITNLSRMD (150 aa)) is the Ferritin-like diiron domain. Fe cation is bound by residues Glu-24, Glu-59, His-62, Glu-104, and Gln-138.

It belongs to the ferritin family. As to quaternary structure, in spleen, forms a homomer. The functional molecule forms a roughly spherical shell with a diameter of 12 nm and contains a central cavity into which the insoluble mineral iron core is deposited. Spleen (at protein level).

It carries out the reaction 4 Fe(2+) + O2 + 4 H(+) = 4 Fe(3+) + 2 H2O. In terms of biological role, stores iron in a soluble, non-toxic, readily available form. Important for iron homeostasis. Has ferroxidase activity. Iron is taken up in the ferrous form and deposited as ferric hydroxides after oxidation. This Trematomus bernacchii (Emerald rockcod) protein is Ferritin, spleen middle subunit.